The chain runs to 328 residues: tRNA uridine(34) hydroxylase (328 aa).

The region spanning 130–224 (LDEDTVVLDT…YGKDPEVQGE (95 aa)) is the Rhodanese domain. Catalysis depends on cysteine 184, which acts as the Cysteine persulfide intermediate.

The protein belongs to the TrhO family.

It carries out the reaction uridine(34) in tRNA + AH2 + O2 = 5-hydroxyuridine(34) in tRNA + A + H2O. Catalyzes oxygen-dependent 5-hydroxyuridine (ho5U) modification at position 34 in tRNAs. The protein is tRNA uridine(34) hydroxylase of Streptococcus gordonii (strain Challis / ATCC 35105 / BCRC 15272 / CH1 / DL1 / V288).